The primary structure comprises 521 residues: Acetylcholine receptor subunit beta-like 1 (521 aa).

The first 24 residues, 1–24 (MESSCKSWLLCSILVLVAFSLVSA), serve as a signal peptide directing secretion. The Extracellular portion of the chain corresponds to 25–235 (SEDEERLVRD…ITFYIIIRRK (211 aa)). Asn-48 is a glycosylation site (N-linked (GlcNAc...) asparagine). The cysteines at positions 152 and 166 are disulfide-linked. 3 helical membrane-spanning segments follow: residues 236 to 260 (TLFY…VFYL), 268 to 286 (VTLG…LLVS), and 302 to 323 (YLLF…IINW). Residues 324 to 481 (NFRGPRTHRM…WKYVAMVIDR (158 aa)) are Cytoplasmic-facing. A helical transmembrane segment spans residues 482–500 (LQLYIFFIVTTAGTVGILM).

Belongs to the ligand-gated ion channel (TC 1.A.9) family. Acetylcholine receptor (TC 1.A.9.1) subfamily. As to expression, CNS in embryos.

It is found in the postsynaptic cell membrane. It localises to the cell membrane. In terms of biological role, after binding acetylcholine, the AChR responds by an extensive change in conformation that affects all subunits and leads to opening of an ion-conducting channel across the plasma membrane. The protein is Acetylcholine receptor subunit beta-like 1 (nAChRbeta1) of Drosophila melanogaster (Fruit fly).